A 669-amino-acid polypeptide reads, in one-letter code: UvrABC system protein B (669 aa).

One can recognise a Helicase ATP-binding domain in the interval 26 to 183 (TNFHAGIAKQ…RHLTELQYTR (158 aa)). Residue 39-46 (GVTGSGKT) participates in ATP binding. The short motif at 92–115 (YYDYYQPEAYVPASDTFIEKDSSI) is the Beta-hairpin element. The 167-residue stretch at 431–597 (QVDDLISQIN…SVVRPISDIL (167 aa)) folds into the Helicase C-terminal domain. The UVR domain maps to 631–666 (AAQMKVLEQKMYQHARDLEFEDAARIRDQIQRLREA).

It belongs to the UvrB family. Forms a heterotetramer with UvrA during the search for lesions. Interacts with UvrC in an incision complex.

It is found in the cytoplasm. In terms of biological role, the UvrABC repair system catalyzes the recognition and processing of DNA lesions. A damage recognition complex composed of 2 UvrA and 2 UvrB subunits scans DNA for abnormalities. Upon binding of the UvrA(2)B(2) complex to a putative damaged site, the DNA wraps around one UvrB monomer. DNA wrap is dependent on ATP binding by UvrB and probably causes local melting of the DNA helix, facilitating insertion of UvrB beta-hairpin between the DNA strands. Then UvrB probes one DNA strand for the presence of a lesion. If a lesion is found the UvrA subunits dissociate and the UvrB-DNA preincision complex is formed. This complex is subsequently bound by UvrC and the second UvrB is released. If no lesion is found, the DNA wraps around the other UvrB subunit that will check the other stand for damage. In Xylella fastidiosa (strain M23), this protein is UvrABC system protein B.